A 205-amino-acid polypeptide reads, in one-letter code: TATA-box-binding protein (205 aa).

2 repeat units span residues 27–103 and 117–194.

The protein belongs to the TBP family. In terms of assembly, belongs to the TFIID complex together with the TBP-associated factors (TAFs). Binds DNA as monomer.

The protein localises to the nucleus. Its function is as follows. General transcription factor that functions at the core of the DNA-binding multiprotein factor TFIID. Binding of TFIID to the TATA box is the initial transcriptional step of the pre-initiation complex (PIC), playing a role in the activation of eukaryotic genes transcribed by RNA polymerase II. The chain is TATA-box-binding protein (tbpA) from Dictyostelium discoideum (Social amoeba).